The sequence spans 265 residues: Major pollen allergen Hol l 1 (265 aa).

A signal peptide spans 1-25 (MASSSRSVLLLVAALFAVFLGSAHG). N-linked (GlcNAc...) asparagine glycosylation occurs at asparagine 34. The Expansin-like EG45 domain occupies 63 to 169 (GGACGYKDVD…RRVKCKYPDG (107 aa)). An Expansin-like CBD domain is found at 183–264 (NYLALLVKYI…GWKADTAYEA (82 aa)).

The protein belongs to the expansin family. Expansin B subfamily.

It is found in the secreted. The chain is Major pollen allergen Hol l 1 from Holcus lanatus (Yorkshire-fog).